The chain runs to 249 residues: Glutathione S-transferase tcpG (249 aa).

The GST N-terminal domain maps to leucine 20–glycine 109. The GST C-terminal domain occupies asparagine 115–arginine 249.

This sequence belongs to the GST superfamily.

The enzyme catalyses RX + glutathione = an S-substituted glutathione + a halide anion + H(+). It participates in secondary metabolite biosynthesis. Glutathione S-transferase; part of the gene cluster that mediates the biosynthesis of an unusual class of epipolythiodioxopiperazines (ETPs) lacking the reactive thiol group important for toxicity. Firstly, L-tyrosine is prenylated by tcpD, before undergoing condensation with L-glycine in a reaction catalyzed by the NRPS tcpP leading to the diketopiperazine (DKP) backbone. Afterwards the alpha-carbon of tyrosine is oxidized by the cytochrome P450 tcpC to form a hydroxyl group. However, in contrast other ETP biosynthesis pathways studied so far, tcpC is not able to bishydroxylate the DKP at both alpha-carbon positions, but hydroxylates the alpha-carbon of the tyrosine part and the nitrogen of the glycine part. The next steps involve an alpha,beta-elimination reaction catalyzed by tcpI, a methylation by the methyltransferase tcpN the action of the four enzyme cascade tcpG/K/J/I. Due to a dysfunctional cytochrome P450 monooxygenase tcpC, the pathway leads to the biosynthesis of probable non-toxic metabolites lacking the reactive thiol group. The protein is Glutathione S-transferase tcpG of Claviceps purpurea (strain 20.1) (Ergot fungus).